A 57-amino-acid polypeptide reads, in one-letter code: uncharacterized protein (57 aa).

A helical transmembrane segment spans residues threonine 34–alanine 51.

Its subcellular location is the membrane. This is an uncharacterized protein from Dictyostelium discoideum (Social amoeba).